The sequence spans 539 residues: CTP synthase (539 aa).

Positions 1 to 268 (MSFKSIFLTG…SDFLLNKLGF (268 aa)) are amidoligase domain. CTP is bound at residue Ser-14. Residue Ser-14 participates in UTP binding. 15 to 20 (SLGKGL) lines the ATP pocket. L-glutamine is bound at residue Tyr-55. Residue Asp-72 participates in ATP binding. The Mg(2+) site is built by Asp-72 and Glu-142. Residues 149 to 151 (DIE), 188 to 193 (KTKPTQ), and Lys-224 contribute to the CTP site. UTP contacts are provided by residues 188–193 (KTKPTQ) and Lys-224. The Glutamine amidotransferase type-1 domain maps to 294-532 (RIGLVGKYLE…IRAAKAYSLE (239 aa)). Gly-353 contributes to the L-glutamine binding site. Cys-380 functions as the Nucleophile; for glutamine hydrolysis in the catalytic mechanism. L-glutamine-binding positions include 381 to 384 (LGMQ), Glu-404, and Arg-460. Catalysis depends on residues His-505 and Glu-507.

Belongs to the CTP synthase family. In terms of assembly, homotetramer.

The enzyme catalyses UTP + L-glutamine + ATP + H2O = CTP + L-glutamate + ADP + phosphate + 2 H(+). The catalysed reaction is L-glutamine + H2O = L-glutamate + NH4(+). It catalyses the reaction UTP + NH4(+) + ATP = CTP + ADP + phosphate + 2 H(+). It participates in pyrimidine metabolism; CTP biosynthesis via de novo pathway; CTP from UDP: step 2/2. Its activity is regulated as follows. Allosterically activated by GTP, when glutamine is the substrate; GTP has no effect on the reaction when ammonia is the substrate. The allosteric effector GTP functions by stabilizing the protein conformation that binds the tetrahedral intermediate(s) formed during glutamine hydrolysis. Inhibited by the product CTP, via allosteric rather than competitive inhibition. In terms of biological role, catalyzes the ATP-dependent amination of UTP to CTP with either L-glutamine or ammonia as the source of nitrogen. Regulates intracellular CTP levels through interactions with the four ribonucleotide triphosphates. The polypeptide is CTP synthase (Chlamydia trachomatis serovar A (strain ATCC VR-571B / DSM 19440 / HAR-13)).